The chain runs to 173 residues: Large ribosomal subunit protein uL16 (173 aa).

It belongs to the universal ribosomal protein uL16 family.

This chain is Large ribosomal subunit protein uL16, found in Methanosarcina acetivorans (strain ATCC 35395 / DSM 2834 / JCM 12185 / C2A).